A 684-amino-acid chain; its full sequence is UvrABC system protein C (684 aa).

The region spanning 16–95 (TDPGVYKFRD…IKRFDPRFNV (80 aa)) is the GIY-YIG domain. A UVR domain is found at 208-243 (APVRKRVTQRMEEAAENLEFELAARLRDDLGAIDKL). Residues 332–352 (EAAEDAKLERRGVDQESHAEP) show a composition bias toward basic and acidic residues. The disordered stretch occupies residues 332-357 (EAAEDAKLERRGVDQESHAEPRQGNA).

This sequence belongs to the UvrC family. Interacts with UvrB in an incision complex.

The protein resides in the cytoplasm. Its function is as follows. The UvrABC repair system catalyzes the recognition and processing of DNA lesions. UvrC both incises the 5' and 3' sides of the lesion. The N-terminal half is responsible for the 3' incision and the C-terminal half is responsible for the 5' incision. This Corynebacterium aurimucosum (strain ATCC 700975 / DSM 44827 / CIP 107346 / CN-1) (Corynebacterium nigricans) protein is UvrABC system protein C.